We begin with the raw amino-acid sequence, 410 residues long: Chorismate synthase (410 aa).

2 residues coordinate NADP(+): arginine 43 and arginine 49. Residues 143-145, 264-265, glycine 308, 323-327, and arginine 349 contribute to the FMN site; these read RSS, QA, and KPIST.

Belongs to the chorismate synthase family. In terms of assembly, homotetramer. FMNH2 serves as cofactor.

The catalysed reaction is 5-O-(1-carboxyvinyl)-3-phosphoshikimate = chorismate + phosphate. It functions in the pathway metabolic intermediate biosynthesis; chorismate biosynthesis; chorismate from D-erythrose 4-phosphate and phosphoenolpyruvate: step 7/7. Catalyzes the anti-1,4-elimination of the C-3 phosphate and the C-6 proR hydrogen from 5-enolpyruvylshikimate-3-phosphate (EPSP) to yield chorismate, which is the branch point compound that serves as the starting substrate for the three terminal pathways of aromatic amino acid biosynthesis. This reaction introduces a second double bond into the aromatic ring system. The polypeptide is Chorismate synthase (Corynebacterium glutamicum (strain ATCC 13032 / DSM 20300 / JCM 1318 / BCRC 11384 / CCUG 27702 / LMG 3730 / NBRC 12168 / NCIMB 10025 / NRRL B-2784 / 534)).